The following is a 334-amino-acid chain: Ornithine carbamoyltransferase (334 aa).

Residues 56-59 (STRT), Gln83, Arg107, and 134-137 (HPTQ) contribute to the carbamoyl phosphate site. L-ornithine-binding positions include Asn168, Asp232, and 236-237 (SM). Residues 274 to 275 (CL) and Arg320 contribute to the carbamoyl phosphate site.

It belongs to the aspartate/ornithine carbamoyltransferase superfamily. OTCase family.

The protein resides in the cytoplasm. It catalyses the reaction carbamoyl phosphate + L-ornithine = L-citrulline + phosphate + H(+). It functions in the pathway amino-acid biosynthesis; L-arginine biosynthesis; L-arginine from L-ornithine and carbamoyl phosphate: step 1/3. Reversibly catalyzes the transfer of the carbamoyl group from carbamoyl phosphate (CP) to the N(epsilon) atom of ornithine (ORN) to produce L-citrulline. The sequence is that of Ornithine carbamoyltransferase from Escherichia coli (strain 55989 / EAEC).